The primary structure comprises 200 residues: Blue fluorescence protein (200 aa).

Lumazine-binding repeat units lie at residues 1 to 111 (MFKG…TGGR) and 112 to 200 (SLSG…AGNW).

Monomer.

It localises to the cytoplasm. Blue fluorescence protein (BFP) that can bind 6,7-dimethyl-8-ribityllumazine, riboflavin, and 6-methyl-7-oxo-8-ribityllumazine as a bound fluorophore. Has no riboflavin-synthase activity. The polypeptide is Blue fluorescence protein (Aliivibrio fischeri (Vibrio fischeri)).